The primary structure comprises 348 residues: sn-glycerol-3-phosphate import ATP-binding protein UgpC 3 (348 aa).

Residues 4 to 234 enclose the ABC transporter domain; that stretch reads INIVDVKKNY…PASLFVAGFI (231 aa). 36–43 is a binding site for ATP; sequence GPSGCGKS.

The protein belongs to the ABC transporter superfamily. sn-glycerol-3-phosphate importer (TC 3.A.1.1.3) family. In terms of assembly, the complex is composed of two ATP-binding proteins (UgpC), two transmembrane proteins (UgpA and UgpE) and a solute-binding protein (UgpB).

It is found in the cell inner membrane. The enzyme catalyses sn-glycerol 3-phosphate(out) + ATP + H2O = sn-glycerol 3-phosphate(in) + ADP + phosphate + H(+). In terms of biological role, part of the ABC transporter complex UgpBAEC involved in sn-glycerol-3-phosphate (G3P) import. Responsible for energy coupling to the transport system. This Rhizobium etli (strain ATCC 51251 / DSM 11541 / JCM 21823 / NBRC 15573 / CFN 42) protein is sn-glycerol-3-phosphate import ATP-binding protein UgpC 3.